The sequence spans 299 residues: Putative fructokinase (299 aa).

Residue Thr130 participates in ATP binding. 4 residues coordinate Zn(2+): His153, Cys168, His171, and Cys174. ATP contacts are provided by residues Pro182 and 230 to 234; that span reads GVMQQ.

Belongs to the ROK (NagC/XylR) family. Requires Mg(2+) as cofactor.

It carries out the reaction D-fructose + ATP = D-fructose 6-phosphate + ADP + H(+). Inhibited by zinc ions. Seems to be involved in the degradation of glucomannan. The polypeptide is Putative fructokinase (gmuE) (Bacillus subtilis (strain 168)).